We begin with the raw amino-acid sequence, 729 residues long: MLYKGDTLYLDWLEDGIAELVFDAPGSVNKLDTATVASLGQALEVLEKQHDLKGLLLRSNKAAFIVGADITEFLSLFLVPEEQLSQWLHFANSVFNRLEDLPVPTLAAVNGYALGGGCECVLATDYRLATPDLRIGLPETKLGIMPGFGGSVRLPRMLGADSALEIIAAGKDVGAEHALKIGLVDGVVKQEKLIEGAIAVLRQAITGDLDWRAKRQPKLEPLKLSKIEAAMSFTIAKGMVAQTAGKHYPAPMTAVKTIEAAARFGREEALNLENKSFVPLAHTNEARALVGIFLNDQYVKGKAKKLTKDIETPKQAAVLGAGIMGGGIAYQSAWKGVPVIMKDINDKSLNLGMTEAAKLLNKQLERGKIDGLKLAGVISTIHPTLDYAGFDRVDVVVEAVVENPKVKKAVLAETEQKVRPETVLASNTSTIPIGELASALERPENFCGMHFFNPVHRMPLVEIIRGEKSSDETIAKVVAWASKMGKTPIVVNNCPGFFVNRVLFPYFAGFSQLLRDGADFRKVDKVMEKQFGWPMGPAYLLDVVGIDTAHHAQAVMAAGFPQRMQKEYRDAIDALFDASRFGQKNGLGFWRYKEDSKGKPKKEEDAAVDDLLASVSQTKRDFSDDEIIARMMIPMINEVVRCLEEGIIASPAEADMALVYGLGFPPFHGGAFRWLDTQGSAKYLDMAQQYQHLGPLYEVPEGLRDKTRHNEPYYPPVEPARPVGSLKTA.

Residues 1-189 (MLYKGDTLYL…KIGLVDGVVK (189 aa)) form an enoyl-CoA hydratase/isomerase region. Residue aspartate 296 coordinates substrate. Residues 311–729 (ETPKQAAVLG…ARPVGSLKTA (419 aa)) form a 3-hydroxyacyl-CoA dehydrogenase region. NAD(+) contacts are provided by residues methionine 324, aspartate 343, 400–402 (VVE), lysine 407, and serine 429. The For 3-hydroxyacyl-CoA dehydrogenase activity role is filled by histidine 450. Residue asparagine 453 coordinates NAD(+). The substrate site is built by asparagine 500 and tyrosine 660. The disordered stretch occupies residues 707 to 729 (TRHNEPYYPPVEPARPVGSLKTA).

It in the N-terminal section; belongs to the enoyl-CoA hydratase/isomerase family. The protein in the C-terminal section; belongs to the 3-hydroxyacyl-CoA dehydrogenase family. In terms of assembly, heterotetramer of two alpha chains (FadB) and two beta chains (FadA).

It carries out the reaction a (3S)-3-hydroxyacyl-CoA + NAD(+) = a 3-oxoacyl-CoA + NADH + H(+). The catalysed reaction is a (3S)-3-hydroxyacyl-CoA = a (2E)-enoyl-CoA + H2O. The enzyme catalyses a 4-saturated-(3S)-3-hydroxyacyl-CoA = a (3E)-enoyl-CoA + H2O. It catalyses the reaction (3S)-3-hydroxybutanoyl-CoA = (3R)-3-hydroxybutanoyl-CoA. It carries out the reaction a (3Z)-enoyl-CoA = a 4-saturated (2E)-enoyl-CoA. The catalysed reaction is a (3E)-enoyl-CoA = a 4-saturated (2E)-enoyl-CoA. Its pathway is lipid metabolism; fatty acid beta-oxidation. Its function is as follows. Involved in the aerobic and anaerobic degradation of long-chain fatty acids via beta-oxidation cycle. Catalyzes the formation of 3-oxoacyl-CoA from enoyl-CoA via L-3-hydroxyacyl-CoA. It can also use D-3-hydroxyacyl-CoA and cis-3-enoyl-CoA as substrate. The protein is Fatty acid oxidation complex subunit alpha of Salmonella typhi.